The sequence spans 103 residues: NADH-quinone oxidoreductase subunit K (103 aa).

Transmembrane regions (helical) follow at residues 5–25 (ISSYLMVALILFCVGLYGALT), 30–50 (VVVLLSIELMLNAVNINLVAF), and 66–86 (LFTMTVAAAEVAVGLAILIAL).

This sequence belongs to the complex I subunit 4L family. NDH-1 is composed of 14 different subunits. Subunits NuoA, H, J, K, L, M, N constitute the membrane sector of the complex.

It localises to the cell membrane. The enzyme catalyses a quinone + NADH + 5 H(+)(in) = a quinol + NAD(+) + 4 H(+)(out). NDH-1 shuttles electrons from NADH, via FMN and iron-sulfur (Fe-S) centers, to quinones in the respiratory chain. The immediate electron acceptor for the enzyme in this species is believed to be a menaquinone. Couples the redox reaction to proton translocation (for every two electrons transferred, four hydrogen ions are translocated across the cytoplasmic membrane), and thus conserves the redox energy in a proton gradient. This chain is NADH-quinone oxidoreductase subunit K, found in Brevibacillus brevis (strain 47 / JCM 6285 / NBRC 100599).